Here is a 1160-residue protein sequence, read N- to C-terminus: Protein GIGANTEA (1160 aa).

Polar residues predominate over residues 158–169 (CSSTSDQASSCE). 3 disordered regions span residues 158–188 (CSST…RKPL), 600–629 (GGSK…RNRC), and 800–830 (PVKK…SRSH). Residues 170–187 (SMEKRANGSPRNEPDRKP) are compositionally biased toward basic and acidic residues. A compositionally biased stretch (basic and acidic residues) spans 801 to 812 (VKKDEPPIEEKN).

This sequence belongs to the GIGANTEA family.

The protein localises to the nucleus. Its function is as follows. Involved in regulation of circadian rhythm, and in the control of the photoperiodic flowering. Acts as a suppressor of flowering under short-day (SD) and long-day (LD) conditions. Activates Hd1/CONSTANS gene. The polypeptide is Protein GIGANTEA (GI) (Oryza sativa subsp. japonica (Rice)).